The sequence spans 304 residues: Secreted mono- and diacylglycerol lipase LIP1 (304 aa).

Positions methionine 1 to alanine 19 are cleaved as a signal peptide. The O-linked (Man...) threonine glycan is linked to threonine 32. A disulfide bond links cysteine 57 and cysteine 297. The active-site Nucleophile is serine 171. Residue aspartate 228 is part of the active site. Asparagine 253 carries an N-linked (GlcNAc...) asparagine glycan. Residue histidine 281 is part of the active site.

Belongs to the AB hydrolase superfamily. Lipase family. Class 3 subfamily.

It localises to the secreted. The protein localises to the cell wall. The catalysed reaction is a monoacylglycerol + H2O = glycerol + a fatty acid + H(+). It carries out the reaction a diacylglycerol + H2O = a monoacylglycerol + a fatty acid + H(+). RHC 80267, a well-known inhibitor of diacylglycerol lipases from mammals, also acts as an inhibitor for LIP1/SMG1. In terms of biological role, secreted lipase involved in Dandruff and seborrheic dermatitis (D/SD) probably via lipase-mediated breakdown of sebaceous lipids and release of irritating free fatty acids. Shows activity against monoglyceride and diglyceride substrates, but not triglyceride substrates and does not exhibit regio-selective production of diacylglycerols. Able to hydrolyze diacylglycerols such as distearin, dilinolein, dipalmitoylglycerol and dipalmitolein. Cleaves oleic acid from 1,2 isomers of diolein on both the 1 and the 2 position of the glycerol backbone, resulting mainly in free fatty acids but no monoolein is detected. Shows activity on monoolein and liberates mostly free fatty acids, but can also perform the reverse reaction and produce diolein. The protein is Secreted mono- and diacylglycerol lipase LIP1 of Malassezia globosa (strain ATCC MYA-4612 / CBS 7966) (Dandruff-associated fungus).